Here is a 120-residue protein sequence, read N- to C-terminus: Large ribosomal subunit protein uL18 (120 aa).

This sequence belongs to the universal ribosomal protein uL18 family. Part of the 50S ribosomal subunit; part of the 5S rRNA/L5/L18/L25 subcomplex. Contacts the 5S and 23S rRNAs.

In terms of biological role, this is one of the proteins that bind and probably mediate the attachment of the 5S RNA into the large ribosomal subunit, where it forms part of the central protuberance. The sequence is that of Large ribosomal subunit protein uL18 from Brucella abortus (strain S19).